We begin with the raw amino-acid sequence, 372 residues long: Gustatory and pheromone receptor 39a, isoform B (372 aa).

Residues 1–32 (MGTRNRKLLFFLHYQRYLGLTNLDFSKSLHIY) are Cytoplasmic-facing. A helical membrane pass occupies residues 33–53 (WLHGTWSSTAIQIVVVGVFMA). At 54-59 (ALLGAL) the chain is on the extracellular side. Residues 60-80 (AESLYYMETKSQTGNTFDNAV) form a helical membrane-spanning segment. Residues 81-122 (ILTTSVTQLLANLWLRSQQKSQVNLLQRLSQVVELLQFEPYA) are Cytoplasmic-facing. A helical membrane pass occupies residues 123-143 (VPQFRWLYRIWLLVCLIYGAM). At 144–147 (VTHF) the chain is on the extracellular side. A helical membrane pass occupies residues 148 to 168 (GINWLTTMQISRVLTLIGFVY). At 169-224 (RCVLANFQFTCYTGMVVILKKLLQVQVKQLEHLVSTTTISMAGVAGCLRTHDEILL) the chain is on the cytoplasmic side. A helical transmembrane segment spans residues 225-245 (LGQRELIAVYGGVILFLFIYQ). Residues 246–265 (VMQCILIFYISNLEGFHSSN) are Extracellular-facing. A helical transmembrane segment spans residues 266–286 (DLVLIFCWLAPMLFYLILPLV). Topologically, residues 287–348 (VNDIHNQANK…KSTLFKLFTA (62 aa)) are cytoplasmic. The chain crosses the membrane as a helical span at residues 349-368 (IFTYMVILVQFKEMENSTKS). Residue Ile369 is a topological domain, extracellular.

Belongs to the insect chemoreceptor superfamily. Gustatory receptor (GR) family. Gr21a subfamily. Expressed in the adult labellar chemosensory neurons. In larvae, is expressed in neurons of the terminal external chemosensory organ, as well as in the dorsal and posterior pharyngeal sense organs.

The protein resides in the cell membrane. In terms of biological role, gustatory receptor which mediates acceptance or avoidance behavior, depending on its substrates. Plays a role in sustaining courtship behavior in males, possibly through the reception of a stimulating arrestant pheromone. This Drosophila melanogaster (Fruit fly) protein is Gustatory and pheromone receptor 39a, isoform B (Gr39a).